A 345-amino-acid chain; its full sequence is Probable RuBisCO transcriptional regulator (345 aa).

An HTH lysR-type domain is found at 6 to 63 (FTLDQLRILKAIASEGSFKRAADTLYVSQPAVSLQVQNLEKQLSVPLFDRGGRKAQLT). The H-T-H motif DNA-binding region spans 23 to 42 (FKRAADTLYVSQPAVSLQVQ). The disordered stretch occupies residues 311 to 345 (LDPERLFANPYSSNNGDRQGDGKDGKGSIEIDSVT). Basic and acidic residues predominate over residues 328 to 339 (RQGDGKDGKGSI).

It belongs to the LysR transcriptional regulatory family.

In terms of biological role, trans-acting transcriptional regulator of RuBisCO genes (rbcL and rbcS) expression. This is Probable RuBisCO transcriptional regulator (rbcR) from Synechocystis sp. (strain ATCC 27184 / PCC 6803 / Kazusa).